A 173-amino-acid chain; its full sequence is ATP synthase subunit b (173 aa).

Residues 25–45 form a helical membrane-spanning segment; it reads LINLVIVIGVLYWFLKGFLGG.

This sequence belongs to the ATPase B chain family. In terms of assembly, F-type ATPases have 2 components, F(1) - the catalytic core - and F(0) - the membrane proton channel. F(1) has five subunits: alpha(3), beta(3), gamma(1), delta(1), epsilon(1). F(0) has four main subunits: a(1), b(1), b'(1) and c(10-14). The alpha and beta chains form an alternating ring which encloses part of the gamma chain. F(1) is attached to F(0) by a central stalk formed by the gamma and epsilon chains, while a peripheral stalk is formed by the delta, b and b' chains.

The protein resides in the cellular thylakoid membrane. Its function is as follows. F(1)F(0) ATP synthase produces ATP from ADP in the presence of a proton or sodium gradient. F-type ATPases consist of two structural domains, F(1) containing the extramembraneous catalytic core and F(0) containing the membrane proton channel, linked together by a central stalk and a peripheral stalk. During catalysis, ATP synthesis in the catalytic domain of F(1) is coupled via a rotary mechanism of the central stalk subunits to proton translocation. Functionally, component of the F(0) channel, it forms part of the peripheral stalk, linking F(1) to F(0). This Synechococcus sp. (strain CC9311) protein is ATP synthase subunit b.